The sequence spans 167 residues: Large ribosomal subunit protein uL10 (167 aa).

Belongs to the universal ribosomal protein uL10 family. As to quaternary structure, part of the ribosomal stalk of the 50S ribosomal subunit. The N-terminus interacts with L11 and the large rRNA to form the base of the stalk. The C-terminus forms an elongated spine to which L12 dimers bind in a sequential fashion forming a multimeric L10(L12)X complex.

Functionally, forms part of the ribosomal stalk, playing a central role in the interaction of the ribosome with GTP-bound translation factors. The polypeptide is Large ribosomal subunit protein uL10 (Dichelobacter nodosus (strain VCS1703A)).